A 3946-amino-acid chain; its full sequence is Hybrid PKS-NRPS synthetase lepA (3946 aa).

The region spanning 9–440 is the Ketosynthase family 3 (KS3) domain; sequence VEPIAIVGSA…GTNAHVILEG (432 aa). Residues Cys-183, His-320, and His-363 each act as for beta-ketoacyl synthase activity in the active site. The malonyl-CoA:ACP transacylase (MAT) domain stretch occupies residues 553–871; it reads IFTGQGAQWA…PYAGIMRRAT (319 aa). Residues 945 to 1073 are N-terminal hotdog fold; that stretch reads HELLGRRAPD…GRLILFKGEG (129 aa). Positions 945–1238 are dehydratase (DH) domain; sequence HELLGRRAPD…RLQSFTEAKA (294 aa). The 295-residue stretch at 945–1239 folds into the PKS/mFAS DH domain; the sequence is HELLGRRAPD…LQSFTEAKAL (295 aa). Catalysis depends on His-977, which acts as the Proton acceptor; for dehydratase activity. Positions 1088–1239 are C-terminal hotdog fold; sequence LSPLDREMFY…LQSFTEAKAL (152 aa). The active-site Proton donor; for dehydratase activity is the Asp-1147. The methyltransferase (MT) domain stretch occupies residues 1380–1580; that stretch reads LLNRFYTDGR…ATVSDLPSDG (201 aa). Positions 2093–2266 are ketoreductase (KR) domain; sequence TYWMIGLNSE…AASVIDIGLV (174 aa). A compositionally biased stretch (low complexity) spans 2352–2365; sequence SSQDSDQSNSTSAS. A disordered region spans residues 2352 to 2372; it reads SSQDSDQSNSTSASIRDQVSS. In terms of domain architecture, Carrier 1 spans 2378-2455; the sequence is EGTDVLLRCF…EICAEAIQKF (78 aa). Ser-2415 carries the post-translational modification O-(pantetheine 4'-phosphoryl)serine. Positions 2474–2531 are disordered; sequence KQATASPPEIGREEAQSTSRAGILPTDQDNDNSSDSESQRKSGASSSSGSGTRTPTSI. Residues 2508–2530 show a composition bias toward low complexity; it reads DSESQRKSGASSSSGSGTRTPTS. The tract at residues 2547-2976 is condensation (C) domain; the sequence is PMSYAQSRLW…MQIQDGLLND (430 aa). Residues 3000 to 3402 form an adenylation (A) (KR) domain region; it reads FSQRAATDAN…GGLIFMGRLD (403 aa). Residues 3492 to 3511 form a disordered region; it reads GKVDRKALQDKPLPTEPDSS. The region spanning 3515–3594 is the Carrier 2 domain; that stretch reads EALSLAEGEL…RMATLIDAEK (80 aa). Ser-3554 is subject to O-(pantetheine 4'-phosphoryl)serine. Residues 3633–3833 are reductase (RED) domain; it reads LTGSTGFLGM…RFSVLMKVVP (201 aa).

The protein in the C-terminal section; belongs to the NRP synthetase family.

Functionally, hybrid PKS-NRPS synthetase; part of the gene cluster 23 that mediates the biosynthesis of a family of 2-pyridones known as leporins. The hybrid PKS-NRPS synthetase lepA and the enoyl reductase lepG are responsible for fusion of phenylalanine with a hexaketide and subsequent release of the stable tetramic acid precursor, pre-leporin C. Because lepA lacks a designated enoylreductase (ER) domain, the required activity is provided the enoyl reductase lepG. It is possible that the dehydrogenase lepF also participates in production of pre-leporin C. Cytochrome P450 monooxygenase lepH is then required for the ring expansion step to yield leporin C. Leporin C is then presumably further oxidized by the N-hydroxylase lepD to form leporin B. LepI may possess a function in biosynthesis upstream of lepA. Leporin B is further oxidized in the presence of ferric ion to give the leporin B trimer-iron chelate, but whether or not this reaction is catalyzed by an enzyme in the pathway or by ferric ion is not determined yet. The chain is Hybrid PKS-NRPS synthetase lepA from Aspergillus flavus (strain ATCC 200026 / FGSC A1120 / IAM 13836 / NRRL 3357 / JCM 12722 / SRRC 167).